A 275-amino-acid chain; its full sequence is UPF0328 protein ECU05_0050 (275 aa).

This sequence belongs to the UPF0328 family.

The protein is UPF0328 protein ECU05_0050 of Encephalitozoon cuniculi (strain GB-M1) (Microsporidian parasite).